The chain runs to 236 residues: E3 ubiquitin-protein ligase RNF187 (236 aa).

The RING-type zinc finger occupies 12–53 (CALCQRAPREPVRADCGHRFCRACVVRFWAEEDGPFPCPECA). 2 positions are modified to asymmetric dimethylarginine; by PRMT1: Arg98 and Arg109. Residue Lys195 forms a Glycyl lysine isopeptide (Lys-Gly) (interchain with G-Cter in ubiquitin) linkage. Residue Ser200 is modified to Phosphoserine. Glycyl lysine isopeptide (Lys-Gly) (interchain with G-Cter in ubiquitin) cross-links involve residues Lys224 and Lys225.

In terms of assembly, homodimer. Interacts with JUN, independently of JUN phosphorylation. Interacts (via C-terminus) with TRIM7. Ubiquitinated; undergoes 'Lys-48'-linked autoubiquitination in the absence of growth factors and MAP3K1-induced 'Lys-63'-linked polyubiquitination. 'Lys-48'-autoubiquitination leads to degradation by the proteasome, while MAP3K1-induced 'Lys-63'-linked polyubiquitination results in the stabilization of the protein. 'Lys-48'- and 'Lys-63'-linked polyubiquitinations occur most probably on the same 3 C-terminal lysine residues (Lys-195, Lys-224 and Lys-225) and are thus mutually exclusive. Other sites of ubiquitination are not excluded. 'Lys-63'-linked polyubiquitination by TRIM7 in response to growth factor signaling via the MEK/ERK pathway enhances protein stability. In terms of processing, arginine methylation by PRMT1 stabilizes RNF187 by facilitating K63-linked ubiquitin chain formation, and enables dimerization, c-Jun interaction and subsequent AP1 target gene expression.

The protein localises to the cytoplasm. The protein resides in the nucleus. It carries out the reaction S-ubiquitinyl-[E2 ubiquitin-conjugating enzyme]-L-cysteine + [acceptor protein]-L-lysine = [E2 ubiquitin-conjugating enzyme]-L-cysteine + N(6)-ubiquitinyl-[acceptor protein]-L-lysine.. It participates in protein modification; protein ubiquitination. In terms of biological role, E3 ubiquitin-protein ligase that acts as a coactivator of JUN-mediated gene activation in response to growth factor signaling via the MAP3K1 pathway, independently from MAPK8. This is E3 ubiquitin-protein ligase RNF187 (Rnf187) from Mus musculus (Mouse).